The following is a 757-amino-acid chain: Catalase-peroxidase (757 aa).

Positions 101–248 (WHSAGTYRIG…LAAVQMGLIY (148 aa)) form a cross-link, tryptophyl-tyrosyl-methioninium (Trp-Tyr) (with M-274). Residue His102 is the Proton acceptor of the active site. A disordered region spans residues 213–232 (VHHPDEHRGAKEKASKNSDS). The tryptophyl-tyrosyl-methioninium (Tyr-Met) (with W-101) cross-link spans 248 to 274 (YVNPEGPDGCPDPLASARDIRETFARM). His289 provides a ligand contact to heme b.

This sequence belongs to the peroxidase family. Peroxidase/catalase subfamily. In terms of assembly, homodimer or homotetramer. The cofactor is heme b. In terms of processing, formation of the three residue Trp-Tyr-Met cross-link is important for the catalase, but not the peroxidase activity of the enzyme.

The catalysed reaction is H2O2 + AH2 = A + 2 H2O. The enzyme catalyses 2 H2O2 = O2 + 2 H2O. In terms of biological role, bifunctional enzyme with both catalase and broad-spectrum peroxidase activity. The protein is Catalase-peroxidase of Xylella fastidiosa (strain M23).